A 143-amino-acid polypeptide reads, in one-letter code: Small ribosomal subunit protein eS19y (143 aa).

Belongs to the eukaryotic ribosomal protein eS19 family.

This chain is Small ribosomal subunit protein eS19y (RPS19B), found in Arabidopsis thaliana (Mouse-ear cress).